The primary structure comprises 689 residues: tRNA 5-methylaminomethyl-2-thiouridine biosynthesis bifunctional protein MnmC (689 aa).

The tRNA (mnm(5)s(2)U34)-methyltransferase stretch occupies residues 1–245; sequence MNQRPIQTAT…KREMLTGTLP (245 aa). The segment at 270-689 is FAD-dependent cmnm(5)s(2)U34 oxidoreductase; sequence IGGGIVSALT…RSPATQESSR (420 aa).

It in the N-terminal section; belongs to the methyltransferase superfamily. tRNA (mnm(5)s(2)U34)-methyltransferase family. The protein in the C-terminal section; belongs to the DAO family. The cofactor is FAD.

The protein localises to the cytoplasm. It catalyses the reaction 5-aminomethyl-2-thiouridine(34) in tRNA + S-adenosyl-L-methionine = 5-methylaminomethyl-2-thiouridine(34) in tRNA + S-adenosyl-L-homocysteine + H(+). In terms of biological role, catalyzes the last two steps in the biosynthesis of 5-methylaminomethyl-2-thiouridine (mnm(5)s(2)U) at the wobble position (U34) in tRNA. Catalyzes the FAD-dependent demodification of cmnm(5)s(2)U34 to nm(5)s(2)U34, followed by the transfer of a methyl group from S-adenosyl-L-methionine to nm(5)s(2)U34, to form mnm(5)s(2)U34. The chain is tRNA 5-methylaminomethyl-2-thiouridine biosynthesis bifunctional protein MnmC from Yersinia pseudotuberculosis serotype O:1b (strain IP 31758).